The chain runs to 312 residues: Olfactory receptor 6C70 (312 aa).

Over 1–22 (MKNHTRQIEFILLGLTDNSQLQ) the chain is Extracellular. A glycan (N-linked (GlcNAc...) asparagine) is linked at Asn3. Residues 23–43 (IVIFLFLLLNCVLSMIGNFTI) form a helical membrane-spanning segment. The Cytoplasmic portion of the chain corresponds to 44-63 (IALILLDSQLKTPMYFFLRN). Residues 64 to 84 (FSFLEISFTTACIPRFLITIV) traverse the membrane as a helical segment. At 85-95 (TREKTISCNGC) the chain is on the extracellular side. An intrachain disulfide couples Cys95 to Cys177. A helical transmembrane segment spans residues 96–116 (ISQLFFYIFLGVTEFFLLAAL). The Cytoplasmic segment spans residues 117–141 (SYDRYVAICKPLRYMSIMSNKVCYQ). The helical transmembrane segment at 142–162 (LVFSSWVTGFLIIFTPLILGL) threads the bilayer. Residues 163–194 (NLDFCASNIIDHFICDISLILQLSCSDTHLLE) lie on the Extracellular side of the membrane. Residues 195–215 (LIAFLLAVMTLIVTLFLVILS) form a helical membrane-spanning segment. The Cytoplasmic segment spans residues 216–237 (YSYIIKTILKFPSAQQKKKAFS). The chain crosses the membrane as a helical span at residues 238 to 258 (TCSSHMIVVSITYGSCMFIYI). Residues 259–272 (KPSANERVALSKGV) are Extracellular-facing. Residues 273 to 290 (TVLNTSVAPLLNPFIYTL) form a helical membrane-spanning segment. The Cytoplasmic portion of the chain corresponds to 291-312 (RNQQVKQAFKAVFRKIFSASDK).

It belongs to the G-protein coupled receptor 1 family.

The protein resides in the cell membrane. Its function is as follows. Odorant receptor. In Homo sapiens (Human), this protein is Olfactory receptor 6C70 (OR6C70).